The sequence spans 329 residues: Ribosomal RNA small subunit methyltransferase C (329 aa).

The protein belongs to the methyltransferase superfamily. RsmC family. Monomer.

Its subcellular location is the cytoplasm. It carries out the reaction guanosine(1207) in 16S rRNA + S-adenosyl-L-methionine = N(2)-methylguanosine(1207) in 16S rRNA + S-adenosyl-L-homocysteine + H(+). Specifically methylates the guanine in position 1207 of 16S rRNA in the 30S particle. In Actinobacillus pleuropneumoniae serotype 3 (strain JL03), this protein is Ribosomal RNA small subunit methyltransferase C.